The primary structure comprises 773 residues: Transducin-like enhancer protein 4 (773 aa).

3 disordered regions span residues 1–22, 140–162, and 182–357; these read MIRD…QPAQ, HGHG…AIPP, and LPIK…DPLA. The q domain stretch occupies residues 1–136; the sequence is MIRDLSKMYP…AIIGQQLQAQ (136 aa). The interval 137–204 is GP domain; sequence HLSHGHGLPV…HQRDRDSIKS (68 aa). Basic and acidic residues predominate over residues 183–202; it reads PIKDEKKHHDNDHQRDRDSI. A compositionally biased stretch (low complexity) spans 203-214; the sequence is KSSSVSPSASFR. Residues 205–274 are ccN domain; it reads SSVSPSASFR…SPRGSPAHSP (70 aa). Residues Ser208, Ser212, Ser216, and Ser222 each carry the phosphoserine modification. The span at 215–252 shows a compositional bias: basic and acidic residues; the sequence is GSEKHRNSTDYSSESKKQKTEEKEIAARYDSDGEKSDD. Residue Lys237 is modified to N6-acetyllysine. A Phosphoserine modification is found at Ser245. Residue Ser250 is modified to Phosphoserine; by CK2. Ser265 is subject to Phosphoserine; by CDK1. Ser269 and Ser273 each carry phosphoserine. Residues 273-289 are compositionally biased toward basic and acidic residues; sequence SPRENGLDKTRLLKKDA. The SP domain stretch occupies residues 275 to 452; sequence RENGLDKTRL…PGGKPAYSFH (178 aa). At Lys281 the chain carries N6-acetyllysine. The span at 290–305 shows a compositional bias: low complexity; sequence PISPASVASSSSTPSS. Ser292 carries the post-translational modification Phosphoserine. The span at 317 to 328 shows a compositional bias: polar residues; the sequence is TTPVSKSNTPTP. Thr318 carries the post-translational modification Phosphothreonine. Phosphoserine is present on residues Ser321 and Ser323. Residues Thr325, Thr327, Thr334, and Thr340 each carry the phosphothreonine modification. At Ser419 the chain carries Phosphoserine. WD repeat units lie at residues 485 to 523, 531 to 570, 575 to 614, 617 to 656, 658 to 697, 699 to 738, and 740 to 773; these read NHGE…NKSP, NRDN…PRIK, SSAP…LVRQ, GHTD…QLQQ, DFTS…KYQL, LHES…SIFQ, and KESS…EVIY.

This sequence belongs to the WD repeat Groucho/TLE family. In terms of assembly, homooligomer and heterooligomer with other family members. Interacts with PAX5. Interacts with LEF1, TCF7, TCF7L1 and TCF7L2. Interacts with ZNF703; TLE4 may mediate ZNF703 transcriptional repression. Interacts with SIX3 and SIX6. Interacts with PAX2. Interacts with TLE1. Phosphorylated. PAX5 binding increases phosphorylation. Post-translationally, ubiquitinated by XIAP/BIRC4. As to expression, expressed in bone marrow-derived macrophages.

The protein localises to the nucleus. Its function is as follows. Transcriptional corepressor that binds to a number of transcription factors. Inhibits the transcriptional activation mediated by PAX5, and by CTNNB1 and TCF family members in Wnt signaling. The effects of full-length TLE family members may be modulated by association with dominant-negative AES. Essential for the transcriptional repressor activity of SIX3 during retina and lens development and for SIX3 transcriptional auto-repression. Involved in transcriptional repression of GNRHR and enhances MSX1-mediated transcriptional repression of CGA/alpha-GSU. In Mus musculus (Mouse), this protein is Transducin-like enhancer protein 4 (Tle4).